A 574-amino-acid polypeptide reads, in one-letter code: Sulfate adenylyltransferase (574 aa).

The segment at 1-170 is N-terminal; sequence MANAPHGGVL…VQAVSKPAYY (170 aa). A catalytic region spans residues 171–395; it reads DYVALRYTPA…LRESYPPKAK (225 aa). Q198 provides a ligand contact to sulfate. ATP contacts are provided by residues 198 to 201 and 292 to 295; these read QTRN and GRDH. Active-site residues include T199, R200, and N201. Sulfate is bound at residue R200. Position 296 (A296) interacts with sulfate. Position 334 (M334) interacts with ATP. Residues 396 to 574 form an allosteric regulation domain; adenylyl-sulfate kinase-like region; the sequence is QGFTLFLTGL…ILLLEAQSLI (179 aa). Residues 435 to 438, R452, 478 to 479, and K519 contribute to the 3'-phosphoadenylyl sulfate site; these read ETVR and IA.

This sequence in the N-terminal section; belongs to the sulfate adenylyltransferase family. The protein in the C-terminal section; belongs to the APS kinase family. As to quaternary structure, homohexamer. Dimer of trimers.

The protein localises to the cytoplasm. It carries out the reaction sulfate + ATP + H(+) = adenosine 5'-phosphosulfate + diphosphate. The protein operates within sulfur metabolism; hydrogen sulfide biosynthesis; sulfite from sulfate: step 1/3. Allosterically inhibited by 3'-phosphoadenosine 5'-phosphosulfate (PAPS). Functionally, catalyzes the first intracellular reaction of sulfate assimilation, forming adenosine-5'-phosphosulfate (APS) from inorganic sulfate and ATP. Plays an important role in sulfate activation as a component of the biosynthesis pathway of sulfur-containing amino acids. This chain is Sulfate adenylyltransferase, found in Mycosarcoma maydis (Corn smut fungus).